Here is a 185-residue protein sequence, read N- to C-terminus: Ribosome-recycling factor (185 aa).

This sequence belongs to the RRF family.

The protein localises to the cytoplasm. Functionally, responsible for the release of ribosomes from messenger RNA at the termination of protein biosynthesis. May increase the efficiency of translation by recycling ribosomes from one round of translation to another. This chain is Ribosome-recycling factor, found in Idiomarina loihiensis (strain ATCC BAA-735 / DSM 15497 / L2-TR).